Reading from the N-terminus, the 147-residue chain is MEDRRCDVLFPCSSSVDPRLTEFHGVDNSAQPTTSSEEKPRSKKKKKEREARYAFQTRSQVDILDDGYRWRKYGQKAVKNNPFPRSYYKCTEEGCRVKKQVQRQWGDEGVVVTTYQGVHTHAVDKPSDNFHHILTQMHIFPPFCLKE.

A disordered region spans residues 21–52 (TEFHGVDNSAQPTTSSEEKPRSKKKKKEREAR). The WRKY DNA-binding region spans 59-124 (SQVDILDDGY…YQGVHTHAVD (66 aa)). Zn(2+)-binding residues include Cys-90, Cys-95, His-119, and His-121.

It belongs to the WRKY group I family.

Its subcellular location is the nucleus. Transcription factor. Interacts specifically with the W box (5'-(T)TGAC[CT]-3'), a frequently occurring elicitor-responsive cis-acting element. The sequence is that of Probable WRKY transcription factor 45 (WRKY45) from Arabidopsis thaliana (Mouse-ear cress).